A 350-amino-acid chain; its full sequence is Phospho-2-dehydro-3-deoxyheptonate aldolase, Phe-sensitive (350 aa).

K244 is subject to N6-acetyllysine.

The protein belongs to the class-I DAHP synthase family. In terms of assembly, homotetramer.

It carries out the reaction D-erythrose 4-phosphate + phosphoenolpyruvate + H2O = 7-phospho-2-dehydro-3-deoxy-D-arabino-heptonate + phosphate. The protein operates within metabolic intermediate biosynthesis; chorismate biosynthesis; chorismate from D-erythrose 4-phosphate and phosphoenolpyruvate: step 1/7. Its function is as follows. Stereospecific condensation of phosphoenolpyruvate (PEP) and D-erythrose-4-phosphate (E4P) giving rise to 3-deoxy-D-arabino-heptulosonate-7-phosphate (DAHP). The chain is Phospho-2-dehydro-3-deoxyheptonate aldolase, Phe-sensitive (aroG) from Escherichia coli O157:H7.